The sequence spans 212 residues: uncharacterized protein (212 aa).

S-adenosyl-L-methionine is bound by residues Gly53, Glu74, and Asp97.

It belongs to the methyltransferase superfamily. YrrT family.

In terms of biological role, could be a S-adenosyl-L-methionine-dependent methyltransferase. This is an uncharacterized protein from Bacillus cereus (strain ATCC 10987 / NRS 248).